The chain runs to 170 residues: Photosystem II extrinsic protein V (170 aa).

An N-terminal signal peptide occupies residues 1–33; sequence MASFFSTLRRSLNRLLIALPVLLGLMISTPAQA. Residues C70, C73, H74, and H125 each contribute to the heme c site.

This sequence belongs to the cytochrome c family. PsbV subfamily. PSII is composed of 1 copy each of membrane proteins PsbA, PsbB, PsbC, PsbD, PsbE, PsbF, PsbH, PsbI, PsbJ, PsbK, PsbL, PsbM, PsbT, PsbX, PsbY, PsbZ, Psb30/Ycf12, peripheral proteins PsbO, CyanoQ (PsbQ), PsbU, PsbV and a large number of cofactors. It forms dimeric complexes. Requires heme c as cofactor.

Its subcellular location is the cellular thylakoid membrane. Functionally, one of the extrinsic, lumenal subunits of photosystem II (PSII). PSII is a light-driven water plastoquinone oxidoreductase, using light energy to abstract electrons from H(2)O, generating a proton gradient subsequently used for ATP formation. The extrinsic proteins stabilize the structure of photosystem II oxygen-evolving complex (OEC), the ion environment of oxygen evolution and protect the OEC against heat-induced inactivation. Low-potential cytochrome c that plays a role in the OEC of PSII. The sequence is that of Photosystem II extrinsic protein V from Synechococcus sp. (strain CC9311).